Here is a 609-residue protein sequence, read N- to C-terminus: Spore-specific protein YSW1 (609 aa).

The interval 1–24 is disordered; the sequence is MSSLADTVEGSEAKRGRFSNNALT. Phosphoserine is present on residues Ser-159 and Ser-160. The segment at 162–225 is disordered; sequence DENESHFTDA…DDEFSPATPP (64 aa). A compositionally biased stretch (polar residues) spans 169–179; it reads TDANSHVMQSK. Residues 200–209 are compositionally biased toward basic and acidic residues; sequence LKKEYEKSFE. Positions 210–219 are enriched in acidic residues; that stretch reads EYSDDSDDEF.

In Saccharomyces cerevisiae (strain ATCC 204508 / S288c) (Baker's yeast), this protein is Spore-specific protein YSW1 (YSW1).